The primary structure comprises 336 residues: Melanoma-associated antigen B17 (336 aa).

The segment covering Met1–Gln17 has biased composition (basic residues). The disordered stretch occupies residues Met1 to Leu108. Composition is skewed to low complexity over residues Pro39–Pro54 and Ser62–Ser80. The segment covering Glu90–Ser103 has biased composition (polar residues). An MAGE domain is found at Leu109 to Pro336.

This chain is Melanoma-associated antigen B17 (MAGEB17), found in Homo sapiens (Human).